Here is a 217-residue protein sequence, read N- to C-terminus: Nuclear transcription factor Y subunit C-3 (217 aa).

Positions 1-28 (MDQQGQSSAMNYGSNPYQTNAMTTTPTG) are enriched in polar residues. Disordered stretches follow at residues 1 to 29 (MDQQ…PTGS) and 198 to 217 (PYMG…DPDN).

The protein belongs to the NFYC/HAP5 subunit family. In terms of assembly, heterotrimeric transcription factor composed of three components, NF-YA, NF-YB and NF-YC. NF-YB and NF-YC must interact and dimerize for NF-YA association and DNA binding. As to expression, ubiquitous.

Its subcellular location is the nucleus. Functionally, stimulates the transcription of various genes by recognizing and binding to a CCAAT motif in promoters. The sequence is that of Nuclear transcription factor Y subunit C-3 (NFYC3) from Arabidopsis thaliana (Mouse-ear cress).